Here is a 191-residue protein sequence, read N- to C-terminus: Putative glutathione-dependent formaldehyde-activating enzyme (191 aa).

One can recognise a CENP-V/GFA domain in the interval 20 to 166 (FAGGNLYCKC…FKAVGLETYD (147 aa)). Positions 27, 29, 48, 50, 53, 95, and 98 each coordinate Zn(2+).

This sequence belongs to the Gfa family. The cofactor is Zn(2+).

It carries out the reaction S-(hydroxymethyl)glutathione = glutathione + formaldehyde. It participates in one-carbon metabolism; formaldehyde degradation; formate from formaldehyde (glutathione route): step 1/3. Its function is as follows. Catalyzes the condensation of formaldehyde and glutathione to S-hydroxymethylglutathione. The polypeptide is Putative glutathione-dependent formaldehyde-activating enzyme (Aspergillus terreus (strain NIH 2624 / FGSC A1156)).